The following is a 311-amino-acid chain: Formimidoylglutamase (311 aa).

Mn(2+)-binding residues include His-130, Asp-155, His-157, Asp-159, Cys-242, and Asp-244.

It belongs to the arginase family. Mn(2+) is required as a cofactor.

The enzyme catalyses N-formimidoyl-L-glutamate + H2O = formamide + L-glutamate. It functions in the pathway amino-acid degradation; L-histidine degradation into L-glutamate; L-glutamate from N-formimidoyl-L-glutamate (hydrolase route): step 1/1. Functionally, catalyzes the conversion of N-formimidoyl-L-glutamate to L-glutamate and formamide. The chain is Formimidoylglutamase from Staphylococcus aureus (strain MSSA476).